The primary structure comprises 209 residues: Large ribosomal subunit protein uL3 (209 aa).

Positions 141–163 are disordered; that stretch reads RAVGSMGASSDPSRTFKNKRMPG.

It belongs to the universal ribosomal protein uL3 family. In terms of assembly, part of the 50S ribosomal subunit. Forms a cluster with proteins L14 and L19.

In terms of biological role, one of the primary rRNA binding proteins, it binds directly near the 3'-end of the 23S rRNA, where it nucleates assembly of the 50S subunit. The protein is Large ribosomal subunit protein uL3 of Clostridium botulinum (strain Langeland / NCTC 10281 / Type F).